The following is a 588-amino-acid chain: MENAVRDLALKHALINAVKFNGKADVKAVVSKIFADNPELRGNAKQVVEVVKEVVNYVNSLTLDEQRRILEEKWPEALGARRTVEEKRGDIESLPELPDADKLSKLTFRFAPNPDFYLHLGSARPAIVNYAYKLKYANKGKDSRFILRFEDTDPRIKRPLLDAYDAIREDLRWLGVKWDEEYIQSDRMSIYYEYARKLIENGGAYVVAKGSGCEPDDWKRLKIEGKPCLTREAESSRNLELFDKMLEGAFNEGEAIVAVKTDLSSPDPSIRDWVAFRVIDAHKYPHPRVGDKYIVWPTYNFAVAIDDHLMGITHVLRAQEHRVNTVKQYYVFKAFGWEQPYTIHFGRLKIEGLKLSKSILKKLNLTKDDVTLPTLAGLRNRGITPEAIWSLILFVGIKETDATISLKNLYAYNRRVIEPLANRYMFVKNPVKLRLRGVGDLIEAKIPMHPSYPERGIRVIKITGEGGYANVYVQASDVKPGLVVRLMGLGNVKVINVSGNEAEADFIGQSVEDARRSEAPIVQWAPPDAVNAEVIIPVNVGQVTVDNGLAEPAVAKLEQGTVMQFIRYGFVKLMGSSNGKLRLVYIHD.

The 'HIGH' region signature appears at 112–122; the sequence is PNPDFYLHLGS.

It belongs to the class-I aminoacyl-tRNA synthetase family. Glutamate--tRNA ligase type 2 subfamily.

It localises to the cytoplasm. It carries out the reaction tRNA(Glu) + L-glutamate + ATP = L-glutamyl-tRNA(Glu) + AMP + diphosphate. Catalyzes the attachment of glutamate to tRNA(Glu) in a two-step reaction: glutamate is first activated by ATP to form Glu-AMP and then transferred to the acceptor end of tRNA(Glu). The polypeptide is Glutamate--tRNA ligase (Caldivirga maquilingensis (strain ATCC 700844 / DSM 13496 / JCM 10307 / IC-167)).